Consider the following 293-residue polypeptide: MLRGSLTALVTPFEKSGRFDEKAFRAFVEWQLGEGTTGLVPVGTTGESPTLSHDEHRHVVKVCIEVANGRAPVVAGAGSNNTAEAVGLVQYAEKAGADAALVVTPYYNKPTQRGLYEHFAAVARATKLPIIIYNIPPRSVIDMMPETMGRLAHDFKNIVGVKDATGKVERVSEQRMTCGKDFIQLSGEDASALGFNAHGGVGCISVTSNVAPRLCAEFQEATLSGDSVKALELQDRLLPLHKAIFLEPGVSGAKYALSKLGKVENVLRSPLVTVEESTAAKIDAAMKHAGLIN.

Thr-45 lines the pyruvate pocket. Residue Tyr-133 is the Proton donor/acceptor of the active site. The active-site Schiff-base intermediate with substrate is Lys-162. Pyruvate is bound at residue Ile-204.

It belongs to the DapA family. As to quaternary structure, homotetramer; dimer of dimers.

Its subcellular location is the cytoplasm. The enzyme catalyses L-aspartate 4-semialdehyde + pyruvate = (2S,4S)-4-hydroxy-2,3,4,5-tetrahydrodipicolinate + H2O + H(+). It participates in amino-acid biosynthesis; L-lysine biosynthesis via DAP pathway; (S)-tetrahydrodipicolinate from L-aspartate: step 3/4. Functionally, catalyzes the condensation of (S)-aspartate-beta-semialdehyde [(S)-ASA] and pyruvate to 4-hydroxy-tetrahydrodipicolinate (HTPA). The protein is 4-hydroxy-tetrahydrodipicolinate synthase of Mesorhizobium japonicum (strain LMG 29417 / CECT 9101 / MAFF 303099) (Mesorhizobium loti (strain MAFF 303099)).